A 281-amino-acid chain; its full sequence is MFSCCFPTSRGCCFRNGGSESLFRQCRRRLIPHPRRLWPFVRRRTQVPQDSPGQALAGQATPEIPSGLPLHIVLVQEEIREPMEAQTHAPGPYADIAALAAPAVEPKPAWEEPPPERALEVEGAPAKDQPSQELPEIMAPTVATGLNAGAENVAGERSGREGVTSTAPASRSHAAPSPGHGGKHGGGDQGIQTGLLYLAGERLLSFAGTTALLLQGLFIVLILVGYISVKVMLKSIKTRLGRRVPAAPPALRRNLLLQAWKCVCNWASRLFAPNVLPRTGS.

Disordered regions lie at residues 107–131 (KPAW…DQPS) and 150–187 (AENV…HGGG). The span at 108-120 (PAWEEPPPERALE) shows a compositional bias: basic and acidic residues. Residues 165–178 (STAPASRSHAAPSP) are compositionally biased toward low complexity. A helical transmembrane segment spans residues 207–227 (AGTTALLLQGLFIVLILVGYI).

Its subcellular location is the membrane. This Homo sapiens (Human) protein is CMT1A duplicated region transcript 15 protein-like protein (CDRT15L2).